A 136-amino-acid chain; its full sequence is ATP synthase F(0) complex subunit C1, mitochondrial (136 aa).

The N-terminal 61 residues, 1–61 (MQTTGALLIS…REFQTSVVSR (61 aa)), are a transit peptide targeting the mitochondrion. The chain crosses the membrane as a helical span at residues 77-97 (VGVAGSGAGIGTVFGSLIIGY). Lys-104 bears the N6,N6,N6-trimethyllysine mark. Residues 112–132 (ILGFALFEAMGLFCLMVAFLI) traverse the membrane as a helical segment.

It belongs to the ATPase C chain family. In terms of assembly, homooctamer; the c-ring consists of eight c subunits forming a circle, and each subunit adopts a hairpin shape. Component of the ATP synthase complex composed at least of ATP5F1A/subunit alpha, ATP5F1B/subunit beta, ATP5MC1/subunit c (homooctomer), MT-ATP6/subunit a, MT-ATP8/subunit 8, ATP5ME/subunit e, ATP5MF/subunit f, ATP5MG/subunit g, ATP5MK/subunit k, ATP5MJ/subunit j, ATP5F1C/subunit gamma, ATP5F1D/subunit delta, ATP5F1E/subunit epsilon, ATP5PF/subunit F6, ATP5PB/subunit b, ATP5PD/subunit d, ATP5PO/subunit OSCP. ATP synthase complex consists of a soluble F(1) head domain (subunits alpha(3) and beta(3)) - the catalytic core - and a membrane F(0) domain - the membrane proton channel (subunits c, a, 8, e, f, g, k and j). These two domains are linked by a central stalk (subunits gamma, delta, and epsilon) rotating inside the F1 region and a stationary peripheral stalk (subunits F6, b, d, and OSCP). Interacts with TMEM70 (homooligomer form); this interaction facilitates the oligomer formation of subunit c/ATP5MC1 (c-ring) and the c-ring membrane insertion and also protects ATP5MC1 against intramitochondrial proteolysis. In terms of processing, trimethylated by ATPSCKMT at Lys-104. Methylation is required for proper incorporation of the C subunit into the ATP synthase complex and mitochondrial respiration.

Its subcellular location is the mitochondrion membrane. The enzyme catalyses H(+)(in) = H(+)(out). Its function is as follows. Subunit c, of the mitochondrial membrane ATP synthase complex (F(1)F(0) ATP synthase or Complex V) that produces ATP from ADP in the presence of a proton gradient across the membrane which is generated by electron transport complexes of the respiratory chain. ATP synthase complex consist of a soluble F(1) head domain - the catalytic core - and a membrane F(1) domain - the membrane proton channel. These two domains are linked by a central stalk rotating inside the F(1) region and a stationary peripheral stalk. During catalysis, ATP synthesis in the catalytic domain of F(1) is coupled via a rotary mechanism of the central stalk subunits to proton translocation. With the subunit a (MT-ATP6), forms the proton-conducting channel in the F(0) domain, that contains two crucial half-channels (inlet and outlet) that facilitate proton movement from the mitochondrial intermembrane space (IMS) into the matrix. Protons are taken up via the inlet half-channel and released through the outlet half-channel, following a Grotthuss mechanism. The polypeptide is ATP synthase F(0) complex subunit C1, mitochondrial (Sus scrofa (Pig)).